A 96-amino-acid chain; its full sequence is UPF0235 protein YggU (96 aa).

The protein belongs to the UPF0235 family.

The sequence is that of UPF0235 protein YggU from Escherichia coli (strain K12 / MC4100 / BW2952).